The chain runs to 393 residues: MSGNTFGKLFCVTSFGESHGPALGCVVDGCPPGMELSAEDIQQDLDRRKPGTSRHVTQRREPDTVEILSGVFEGKTTGTPIALLIRNEDQRSKDYSKIMDTFRPGHADYVYWQKYGIRDYRGGGRSSARETAVRVAAAAIAKKWLRARYGVVIRGHMAQLGPVEIPFKQWEAVGENPFFSADPDIVPSLEEFMDKLRKSGDSVGARIRVVAEGVPVGWGEPVYDRLDAEIAYGMMSINAVKGVEIGAGFASVSQKGTEHSDEISPGGFLSNNAGGILGGISTGQDIVVNIAVKPTSSIRLPRRSVDKMGNPAIVETHGRHDPCVGIRATPIAEAMLALVLMDHALRNRAQNADVACTTPKIPGHTGPREGQEEGPSDSEPKVEFADDPEPDEA.

Arginine 48 and arginine 54 together coordinate NADP(+). FMN contacts are provided by residues 125-127 (RSS), 238-239 (NA), glycine 278, 293-297 (KPTSS), and arginine 319. The segment at 355 to 393 (ACTTPKIPGHTGPREGQEEGPSDSEPKVEFADDPEPDEA) is disordered.

The protein belongs to the chorismate synthase family. Homotetramer. FMNH2 is required as a cofactor.

It catalyses the reaction 5-O-(1-carboxyvinyl)-3-phosphoshikimate = chorismate + phosphate. It participates in metabolic intermediate biosynthesis; chorismate biosynthesis; chorismate from D-erythrose 4-phosphate and phosphoenolpyruvate: step 7/7. In terms of biological role, catalyzes the anti-1,4-elimination of the C-3 phosphate and the C-6 proR hydrogen from 5-enolpyruvylshikimate-3-phosphate (EPSP) to yield chorismate, which is the branch point compound that serves as the starting substrate for the three terminal pathways of aromatic amino acid biosynthesis. This reaction introduces a second double bond into the aromatic ring system. This is Chorismate synthase from Nitrosospira multiformis (strain ATCC 25196 / NCIMB 11849 / C 71).